The primary structure comprises 172 residues: S-ribosylhomocysteine lyase (172 aa).

Fe cation-binding residues include His-54, His-58, and Cys-128.

It belongs to the LuxS family. Homodimer. The cofactor is Fe cation.

It carries out the reaction S-(5-deoxy-D-ribos-5-yl)-L-homocysteine = (S)-4,5-dihydroxypentane-2,3-dione + L-homocysteine. Functionally, involved in the synthesis of autoinducer 2 (AI-2) which is secreted by bacteria and is used to communicate both the cell density and the metabolic potential of the environment. The regulation of gene expression in response to changes in cell density is called quorum sensing. Catalyzes the transformation of S-ribosylhomocysteine (RHC) to homocysteine (HC) and 4,5-dihydroxy-2,3-pentadione (DPD). The chain is S-ribosylhomocysteine lyase from Vibrio vulnificus (strain CMCP6).